The following is a 233-amino-acid chain: Orotidine 5'-phosphate decarboxylase (233 aa).

Residues aspartate 11, lysine 34, 61–70 (DLKLHDIPNT), threonine 117, arginine 179, glutamine 188, glycine 208, and arginine 209 contribute to the substrate site. The Proton donor role is filled by lysine 63.

Belongs to the OMP decarboxylase family. Type 1 subfamily. As to quaternary structure, homodimer.

The catalysed reaction is orotidine 5'-phosphate + H(+) = UMP + CO2. It functions in the pathway pyrimidine metabolism; UMP biosynthesis via de novo pathway; UMP from orotate: step 2/2. Its function is as follows. Catalyzes the decarboxylation of orotidine 5'-monophosphate (OMP) to uridine 5'-monophosphate (UMP). This is Orotidine 5'-phosphate decarboxylase from Streptococcus pneumoniae (strain P1031).